Reading from the N-terminus, the 160-residue chain is Phosphopantetheine adenylyltransferase (160 aa).

Position 9 (T9) interacts with substrate. Residues 9–10 (TF) and H17 contribute to the ATP site. 3 residues coordinate substrate: K41, L73, and R87. ATP-binding positions include 88 to 90 (GLR), E98, and 123 to 129 (YMFISAS).

The protein belongs to the bacterial CoaD family. Homohexamer. Mg(2+) serves as cofactor.

The protein localises to the cytoplasm. The catalysed reaction is (R)-4'-phosphopantetheine + ATP + H(+) = 3'-dephospho-CoA + diphosphate. Its pathway is cofactor biosynthesis; coenzyme A biosynthesis; CoA from (R)-pantothenate: step 4/5. In terms of biological role, reversibly transfers an adenylyl group from ATP to 4'-phosphopantetheine, yielding dephospho-CoA (dPCoA) and pyrophosphate. The sequence is that of Phosphopantetheine adenylyltransferase from Thiobacillus denitrificans (strain ATCC 25259 / T1).